The primary structure comprises 320 residues: ATP-dependent 6-phosphofructokinase (320 aa).

ATP is bound at residue G12. Residues 22-26 (RGVVR) and 55-60 (RYSVSD) contribute to the ADP site. Residues 73 to 74 (RF) and 103 to 106 (GDGS) each bind ATP. D104 provides a ligand contact to Mg(2+). 126–128 (TID) provides a ligand contact to substrate. Residue D128 is the Proton acceptor of the active site. R155 serves as a coordination point for ADP. Substrate contacts are provided by residues R163 and 170-172 (MGR). Residues 186-188 (GCE), K212, and 214-216 (KKH) contribute to the ADP site. Substrate contacts are provided by residues E223, R244, and 250–253 (HIQR).

Belongs to the phosphofructokinase type A (PFKA) family. ATP-dependent PFK group I subfamily. Prokaryotic clade 'B1' sub-subfamily. As to quaternary structure, homotetramer. Mg(2+) is required as a cofactor.

It localises to the cytoplasm. It catalyses the reaction beta-D-fructose 6-phosphate + ATP = beta-D-fructose 1,6-bisphosphate + ADP + H(+). Its pathway is carbohydrate degradation; glycolysis; D-glyceraldehyde 3-phosphate and glycerone phosphate from D-glucose: step 3/4. Allosterically activated by ADP and other diphosphonucleosides, and allosterically inhibited by phosphoenolpyruvate. Catalyzes the phosphorylation of D-fructose 6-phosphate to fructose 1,6-bisphosphate by ATP, the first committing step of glycolysis. In Erwinia tasmaniensis (strain DSM 17950 / CFBP 7177 / CIP 109463 / NCPPB 4357 / Et1/99), this protein is ATP-dependent 6-phosphofructokinase.